The chain runs to 406 residues: MANVLDTLMERGYIKQFTHEAETRELLEKEKVTFYIGFDPTADSLHVGHFIAMMFMAHMQKAGHRPIALIGGGTATIGDPSGKTDMRKMMTNETIAHNVACIKKQMEKFIDFSDDKAILVNNADWLLNQNYVEFLREVGVHFSVNRMLSAECFKQRLERGLSFLEFNYMLMQGYDFYVLNKKYNCKMELGGDDQWSNMIAGVELVRKKSQESAYAMTCTLLTNSEGQKMGKTVNGALWLDPEKTSPYEFYQYWRNVNDADVEKCLKLLTFIPMDEVRRLSSLEGSQINEAKKVLAFEVTKLVHGEEEATKAKQAAEALFGKGGDMSNVPTYEMGKDKLGSELLDILVEAEIVPSKAEGKRLVKQGGLSLNGEKVADFKKTLEEADFENGEVLIKRGKKNYNKIVLA.

Y35 is an L-tyrosine binding site. The short motif at 40–49 (PTADSLHVGH) is the 'HIGH' region element. Y168 and Q172 together coordinate L-tyrosine. The 'KMSKS' region motif lies at 228–232 (KMGKT). Position 231 (K231) interacts with ATP. Positions 340–404 (SELLDILVEA…RGKKNYNKIV (65 aa)) constitute an S4 RNA-binding domain.

Belongs to the class-I aminoacyl-tRNA synthetase family. TyrS type 1 subfamily. In terms of assembly, homodimer.

The protein localises to the cytoplasm. It catalyses the reaction tRNA(Tyr) + L-tyrosine + ATP = L-tyrosyl-tRNA(Tyr) + AMP + diphosphate + H(+). In terms of biological role, catalyzes the attachment of tyrosine to tRNA(Tyr) in a two-step reaction: tyrosine is first activated by ATP to form Tyr-AMP and then transferred to the acceptor end of tRNA(Tyr). The chain is Tyrosine--tRNA ligase from Clostridium perfringens (strain ATCC 13124 / DSM 756 / JCM 1290 / NCIMB 6125 / NCTC 8237 / Type A).